We begin with the raw amino-acid sequence, 83 residues long: MAVSTEELEATVQEVLGRLKSHQFFQSTWDTVAFIVFLTFMGTVLLLLLLVVAHCCCCSSPGPRRESPRKERPKGVDNLALEP.

The chain crosses the membrane as a helical span at residues 32 to 52 (VAFIVFLTFMGTVLLLLLLVV). The disordered stretch occupies residues 60-83 (SPGPRRESPRKERPKGVDNLALEP). The span at 63–75 (PRRESPRKERPKG) shows a compositional bias: basic and acidic residues.

As to quaternary structure, interacts with CANX and DDOST. Interacts with SQLE; this interaction modulates lipid droplet formation.

The protein resides in the membrane. It localises to the late endosome. Its function is as follows. May modulate lipid droplet formation throught interaction with SQLE. The polypeptide is Small integral membrane protein 22 (Homo sapiens (Human)).